We begin with the raw amino-acid sequence, 71 residues long: ATP synthase subunit c (71 aa).

2 helical membrane-spanning segments follow: residues 9–29 and 49–69; these read MIGYGLAAIGSAIGVGLIFAA and LLGFALAEALAILGLVFAFVI.

Belongs to the ATPase C chain family. As to quaternary structure, F-type ATPases have 2 components, F(1) - the catalytic core - and F(0) - the membrane proton channel. F(1) has five subunits: alpha(3), beta(3), gamma(1), delta(1), epsilon(1). F(0) has three main subunits: a(1), b(2) and c(10-14). The alpha and beta chains form an alternating ring which encloses part of the gamma chain. F(1) is attached to F(0) by a central stalk formed by the gamma and epsilon chains, while a peripheral stalk is formed by the delta and b chains.

It localises to the cell membrane. Functionally, f(1)F(0) ATP synthase produces ATP from ADP in the presence of a proton or sodium gradient. F-type ATPases consist of two structural domains, F(1) containing the extramembraneous catalytic core and F(0) containing the membrane proton channel, linked together by a central stalk and a peripheral stalk. During catalysis, ATP synthesis in the catalytic domain of F(1) is coupled via a rotary mechanism of the central stalk subunits to proton translocation. In terms of biological role, key component of the F(0) channel; it plays a direct role in translocation across the membrane. A homomeric c-ring of between 10-14 subunits forms the central stalk rotor element with the F(1) delta and epsilon subunits. The chain is ATP synthase subunit c from Micrococcus luteus (strain ATCC 4698 / DSM 20030 / JCM 1464 / CCM 169 / CCUG 5858 / IAM 1056 / NBRC 3333 / NCIMB 9278 / NCTC 2665 / VKM Ac-2230) (Micrococcus lysodeikticus).